Reading from the N-terminus, the 139-residue chain is MERISALGLDIGKKRIGVAGCDGTGLIATGLTTIERTSFQSDVEQLHQWVKEREAQILVVGLPYSMDGSLGFQAKQVQKFTRRISHVLQLPVEYVDERLTSVEAEAQLKSQKRFSTWDKGAIDRQAATIILQQWLDSRR.

It belongs to the YqgF nuclease family.

The protein resides in the cytoplasm. Functionally, could be a nuclease involved in processing of the 5'-end of pre-16S rRNA. The sequence is that of Putative pre-16S rRNA nuclease from Rippkaea orientalis (strain PCC 8801 / RF-1) (Cyanothece sp. (strain PCC 8801)).